The primary structure comprises 413 residues: Serine hydroxymethyltransferase (413 aa).

(6S)-5,6,7,8-tetrahydrofolate is bound by residues leucine 117 and 121–123 (GHL). Lysine 226 carries the N6-(pyridoxal phosphate)lysine modification. Residue 349–351 (SPF) participates in (6S)-5,6,7,8-tetrahydrofolate binding.

Belongs to the SHMT family. As to quaternary structure, homodimer. The cofactor is pyridoxal 5'-phosphate.

It is found in the cytoplasm. The enzyme catalyses (6R)-5,10-methylene-5,6,7,8-tetrahydrofolate + glycine + H2O = (6S)-5,6,7,8-tetrahydrofolate + L-serine. It functions in the pathway one-carbon metabolism; tetrahydrofolate interconversion. Its pathway is amino-acid biosynthesis; glycine biosynthesis; glycine from L-serine: step 1/1. Catalyzes the reversible interconversion of serine and glycine with tetrahydrofolate (THF) serving as the one-carbon carrier. This reaction serves as the major source of one-carbon groups required for the biosynthesis of purines, thymidylate, methionine, and other important biomolecules. Also exhibits THF-independent aldolase activity toward beta-hydroxyamino acids, producing glycine and aldehydes, via a retro-aldol mechanism. This is Serine hydroxymethyltransferase from Listeria monocytogenes serovar 1/2a (strain ATCC BAA-679 / EGD-e).